We begin with the raw amino-acid sequence, 1099 residues long: 1-phosphatidylinositol 4,5-bisphosphate phosphodiesterase 1 (1099 aa).

Residues 1–10 (MLESLNRRNS) show a composition bias toward basic and acidic residues. 2 disordered regions span residues 1-109 (MLES…SSTT) and 128-164 (ESRSIVSNNGGSPMSDSTTVTSTLSTDTAPKRGKSIQ). 2 stretches are compositionally biased toward low complexity: residues 43-66 (PPKSQLLLRKSSSPSSYSPIKSDL) and 86-109 (PKQQSSLSSSSSSSSSSNTKSSTT). Over residues 131-141 (SIVSNNGGSPM) the composition is skewed to polar residues. Residues 142-155 (SDSTTVTSTLSTDT) show a composition bias toward low complexity. The PI-PLC X-box domain occupies 566 to 726 (YDYPLNEYFI…LKHKFIIKVK (161 aa)). Residues histidine 579 and histidine 642 contribute to the active site. Lysine 724 and lysine 726 together coordinate substrate. The tract at residues 742–780 (FTTSTTTTTTTTTTTTTATSLSEDNENNKSNSSSTSSFI) is disordered. A compositionally biased stretch (low complexity) spans 743–778 (TTSTTTTTTTTTTTTTATSLSEDNENNKSNSSSTSS). Residues 794 to 912 (ELSNLGIYTQ…GYVLKPSVLR (119 aa)) form the PI-PLC Y-box domain. Substrate-binding residues include serine 823 and arginine 852. The C2 domain occupies 917 to 1071 (KSSSSNVDTR…QGYRYIYLND (155 aa)).

The catalysed reaction is a 1,2-diacyl-sn-glycero-3-phospho-(1D-myo-inositol-4,5-bisphosphate) + H2O = 1D-myo-inositol 1,4,5-trisphosphate + a 1,2-diacyl-sn-glycerol + H(+). The production of the second messenger molecules diacylglycerol (DAG) and inositol 1,4,5-trisphosphate (IP3) is mediated by activated phosphatidylinositol-specific phospholipase C enzymes. This Candida albicans (Yeast) protein is 1-phosphatidylinositol 4,5-bisphosphate phosphodiesterase 1 (PLC1).